The sequence spans 362 residues: Severin (362 aa).

A Gelsolin-like 1 repeat occupies 53-102 (FKVVPVPESSYGKFYDGDSYIILHTFKEGNSLKHDIHFFLGTFTTQDEAG). 162–170 (RLLHISGDK) contributes to the a 1,2-diacyl-sn-glycero-3-phospho-(1D-myo-inositol-4,5-bisphosphate) binding site. Gelsolin-like repeat units lie at residues 172–212 (AKVA…QEKN) and 280–323 (LKFS…NEKK).

The protein belongs to the villin/gelsolin family.

Its function is as follows. Severin blocks the ends of F-actin and causes the fragmentation and depolymerization of actin filaments in a Ca(2+) dependent manner. The chain is Severin (sevA) from Dictyostelium discoideum (Social amoeba).